Consider the following 175-residue polypeptide: Adenine phosphoribosyltransferase (175 aa).

Belongs to the purine/pyrimidine phosphoribosyltransferase family. Homodimer.

Its subcellular location is the cytoplasm. It catalyses the reaction AMP + diphosphate = 5-phospho-alpha-D-ribose 1-diphosphate + adenine. It functions in the pathway purine metabolism; AMP biosynthesis via salvage pathway; AMP from adenine: step 1/1. Its function is as follows. Catalyzes a salvage reaction resulting in the formation of AMP, that is energically less costly than de novo synthesis. The chain is Adenine phosphoribosyltransferase from Francisella tularensis subsp. holarctica (strain FTNF002-00 / FTA).